A 319-amino-acid polypeptide reads, in one-letter code: Oligopeptide transport ATP-binding protein OppF (319 aa).

The ABC transporter domain maps to 5–255 (LNLKDLKVYY…PQHIYTKRLL (251 aa)). 48–55 (GESGSGKS) provides a ligand contact to ATP.

This sequence belongs to the ABC transporter superfamily. The complex is composed of two ATP-binding proteins (OppD and OppF), two transmembrane proteins (OppB and OppC) and a solute-binding protein (OppA).

Its subcellular location is the cell membrane. It catalyses the reaction a [peptide](out) + ATP + H2O = a [peptide](in) + ADP + phosphate + H(+). Functionally, part of the ABC transporter complex OppABCDF involved in the uptake of oligopeptides. Probably responsible for energy coupling to the transport system. Essential for uptake of peptides larger than three amino acids and for growth in milk. This is Oligopeptide transport ATP-binding protein OppF (oppF) from Lactococcus lactis subsp. lactis (strain IL1403) (Streptococcus lactis).